A 181-amino-acid chain; its full sequence is CDP-diacylglycerol--glycerol-3-phosphate 3-phosphatidyltransferase (181 aa).

Transmembrane regions (helical) follow at residues 8–28 (PNYLTIARIMVIPVIILAFYI), 35–55 (KLGALLFVLASITDFFDGYIA), 64–84 (FGKMFDPIADKLLIGCVIIML), and 148–168 (IIYLDIVGEIILWIAAFLTII).

Belongs to the CDP-alcohol phosphatidyltransferase class-I family.

It is found in the cell membrane. It carries out the reaction a CDP-1,2-diacyl-sn-glycerol + sn-glycerol 3-phosphate = a 1,2-diacyl-sn-glycero-3-phospho-(1'-sn-glycero-3'-phosphate) + CMP + H(+). It functions in the pathway phospholipid metabolism; phosphatidylglycerol biosynthesis; phosphatidylglycerol from CDP-diacylglycerol: step 1/2. This protein catalyzes the committed step to the synthesis of the acidic phospholipids. In Rickettsia felis (strain ATCC VR-1525 / URRWXCal2) (Rickettsia azadi), this protein is CDP-diacylglycerol--glycerol-3-phosphate 3-phosphatidyltransferase (pgsA).